Here is a 201-residue protein sequence, read N- to C-terminus: Ciliary microtubule inner protein 2C (201 aa).

The protein belongs to the CIMIP2 family. In terms of assembly, microtubule inner protein component of sperm flagellar doublet microtubules. As to expression, expressed in airway epithelial cells.

It localises to the cytoplasm. Its subcellular location is the cytoskeleton. It is found in the cilium axoneme. The protein localises to the flagellum axoneme. Microtubule inner protein (MIP) part of the dynein-decorated doublet microtubules (DMTs) in cilia axoneme, which is required for motile cilia beating. Binds to the intra-tubulin interfaces. This is Ciliary microtubule inner protein 2C from Homo sapiens (Human).